A 267-amino-acid chain; its full sequence is MRLIPLQTSEQVSRWAARHIAERINRFQPTADRPFVLGLPTGGTPLQTYKELIRLYQAGEVSFQHVVTFNMDEYVGLPKEHPQSYHTFMYRNFFDHIDIQPQNINILNGNTEDHDAECRRYEEKIKSYGKIHLFMGGVGVDGHIAFNEPASSLGSRTRIKTLTEDTLIANSRFFDNDITKVPKYALTVGVATLLDAEEVMLLITGYNKALALQACVEGSVNHMWTVSALQLHKRGIVVCDEPATQELKVKTVKYFTQLETQAIQSVL.

The active-site Proton acceptor; for enolization step is Asp72. Asp141 acts as the For ring-opening step in catalysis. The active-site Proton acceptor; for ring-opening step is His143. Glu148 (for ring-opening step) is an active-site residue.

This sequence belongs to the glucosamine/galactosamine-6-phosphate isomerase family. NagB subfamily. In terms of assembly, homohexamer.

It catalyses the reaction alpha-D-glucosamine 6-phosphate + H2O = beta-D-fructose 6-phosphate + NH4(+). Its pathway is amino-sugar metabolism; N-acetylneuraminate degradation; D-fructose 6-phosphate from N-acetylneuraminate: step 5/5. Its activity is regulated as follows. Allosterically activated by N-acetylglucosamine 6-phosphate (GlcNAc6P). In terms of biological role, catalyzes the reversible isomerization-deamination of glucosamine 6-phosphate (GlcN6P) to form fructose 6-phosphate (Fru6P) and ammonium ion. This is Glucosamine-6-phosphate deaminase from Actinobacillus pleuropneumoniae serotype 3 (strain JL03).